We begin with the raw amino-acid sequence, 170 residues long: Phosphopantetheine adenylyltransferase (170 aa).

Residue threonine 18 coordinates substrate. ATP-binding positions include 18–19 and histidine 26; that span reads TF. Positions 50, 84, and 98 each coordinate substrate. ATP contacts are provided by residues 99–101, glutamate 109, and 134–140; these read GLR and WIYISSS.

Belongs to the bacterial CoaD family. Homohexamer. The cofactor is Mg(2+).

Its subcellular location is the cytoplasm. The catalysed reaction is (R)-4'-phosphopantetheine + ATP + H(+) = 3'-dephospho-CoA + diphosphate. It participates in cofactor biosynthesis; coenzyme A biosynthesis; CoA from (R)-pantothenate: step 4/5. Its function is as follows. Reversibly transfers an adenylyl group from ATP to 4'-phosphopantetheine, yielding dephospho-CoA (dPCoA) and pyrophosphate. This is Phosphopantetheine adenylyltransferase from Desulfotalea psychrophila (strain LSv54 / DSM 12343).